The sequence spans 454 residues: Putative flavin-containing monoamine oxidase AofH (454 aa).

Belongs to the flavin monoamine oxidase family. FAD serves as cofactor.

In Mycobacterium tuberculosis (strain CDC 1551 / Oshkosh), this protein is Putative flavin-containing monoamine oxidase AofH (aofH).